A 93-amino-acid chain; its full sequence is Putative septation protein SpoVG (93 aa).

Belongs to the SpoVG family.

Could be involved in septation. The chain is Putative septation protein SpoVG from Alkaliphilus oremlandii (strain OhILAs) (Clostridium oremlandii (strain OhILAs)).